The following is an 850-amino-acid chain: Protein translocase subunit SecA 2 (850 aa).

Residues Gln-83, 101–105 (GEGKT), and Asp-491 contribute to the ATP site.

This sequence belongs to the SecA family. In terms of assembly, monomer and homodimer. Part of the essential Sec protein translocation apparatus which comprises SecA, SecYEG and auxiliary proteins SecDF. Other proteins may also be involved.

Its subcellular location is the cell membrane. The protein resides in the cytoplasm. The enzyme catalyses ATP + H2O + cellular proteinSide 1 = ADP + phosphate + cellular proteinSide 2.. Functionally, part of the Sec protein translocase complex. Interacts with the SecYEG preprotein conducting channel. Has a central role in coupling the hydrolysis of ATP to the transfer of proteins into and across the cell membrane, serving as an ATP-driven molecular motor driving the stepwise translocation of polypeptide chains across the membrane. This Mycolicibacterium vanbaalenii (strain DSM 7251 / JCM 13017 / BCRC 16820 / KCTC 9966 / NRRL B-24157 / PYR-1) (Mycobacterium vanbaalenii) protein is Protein translocase subunit SecA 2.